Consider the following 708-residue polypeptide: Leukotoxin translocation ATP-binding protein LktB (708 aa).

A Peptidase C39 domain is found at 1-126 (MEVNHQSNDL…SCYQGKIILV (126 aa)). The region spanning 155 to 437 (FLETLLVSIF…LAQLWQDFTQ (283 aa)) is the ABC transmembrane type-1 domain. A run of 5 helical transmembrane segments spans residues 159-179 (LLVS…FQVV), 192-212 (LNII…LSGL), 270-290 (ALTS…MWYY), 296-316 (LVIL…SPIL), and 389-409 (VMVI…LSIG). The ABC transporter domain maps to 469–704 (IAFKNIRFRY…NNGLYSYLHQ (236 aa)). ATP is bound at residue 503 to 510 (GRSGSGKS).

The protein belongs to the ABC transporter superfamily. Protein-1 exporter (TC 3.A.1.109) family. In terms of assembly, homodimer.

The protein localises to the cell inner membrane. The enzyme catalyses ATP + H2O + proteinSide 1 = ADP + phosphate + proteinSide 2.. Its function is as follows. Part of the ABC transporter complex LktBD involved in leukotoxin export. Transmembrane domains (TMD) form a pore in the inner membrane and the ATP-binding domain (NBD) is responsible for energy generation. In Pasteurella haemolytica-like sp. (strain 5943B), this protein is Leukotoxin translocation ATP-binding protein LktB (lktB).